The primary structure comprises 245 residues: Zinc finger CCCH domain-containing protein 54 (245 aa).

Residues 92–119 (TYCAVACPAFRNGACHRGDSCEFAHGVF) form a C3H1-type zinc finger. A disordered region spans residues 175 to 204 (GNGDGVTMRMDDEGYDTSRSPVRSGKDDLD).

In terms of assembly, interacts with MARD1/FLZ9 and RD21A. As to expression, specifically expressed in embryo (at protein level).

The protein resides in the nucleus. In terms of biological role, embryo-specific transcription factor required at the globular to heart stage transition in embryo development. In Arabidopsis thaliana (Mouse-ear cress), this protein is Zinc finger CCCH domain-containing protein 54.